Consider the following 72-residue polypeptide: Translation initiation factor IF-1 (72 aa).

An S1-like domain is found at 1 to 72 (MSNDDSIEFE…TKGRITYRMK (72 aa)).

It belongs to the IF-1 family. Component of the 30S ribosomal translation pre-initiation complex which assembles on the 30S ribosome in the order IF-2 and IF-3, IF-1 and N-formylmethionyl-tRNA(fMet); mRNA recruitment can occur at any time during PIC assembly.

The protein resides in the cytoplasm. Its function is as follows. One of the essential components for the initiation of protein synthesis. Stabilizes the binding of IF-2 and IF-3 on the 30S subunit to which N-formylmethionyl-tRNA(fMet) subsequently binds. Helps modulate mRNA selection, yielding the 30S pre-initiation complex (PIC). Upon addition of the 50S ribosomal subunit IF-1, IF-2 and IF-3 are released leaving the mature 70S translation initiation complex. The sequence is that of Translation initiation factor IF-1 from Xanthomonas campestris pv. campestris (strain B100).